Consider the following 636-residue polypeptide: ATP-dependent zinc metalloprotease FtsH (636 aa).

Topologically, residues 1 to 12 (MKKLLENLSLWM) are cytoplasmic. A helical membrane pass occupies residues 13–33 (GIIILVTLLFGQVALNFGFGI). Residues 34-104 (RNEKIQFSEF…VASGDSFLGL (71 aa)) are Periplasmic-facing. A helical transmembrane segment spans residues 105 to 125 (LFNILISWFPMLLLIGVWIFF). The Cytoplasmic segment spans residues 126–636 (MKQMQAGGNK…ESDLDTGDKE (511 aa)). 197–204 (GPPGTGKT) contacts ATP. H419 contributes to the Zn(2+) binding site. Residue E420 is part of the active site. Zn(2+) is bound by residues H423 and D497.

In the central section; belongs to the AAA ATPase family. The protein in the C-terminal section; belongs to the peptidase M41 family. In terms of assembly, homohexamer. Zn(2+) is required as a cofactor.

It is found in the cell inner membrane. Functionally, acts as a processive, ATP-dependent zinc metallopeptidase for both cytoplasmic and membrane proteins. Plays a role in the quality control of integral membrane proteins. The polypeptide is ATP-dependent zinc metalloprotease FtsH (Neorickettsia risticii (strain Illinois)).